Here is a 186-residue protein sequence, read N- to C-terminus: TATA box-binding protein-like 1 (186 aa).

The protein belongs to the TBP family. Expressed ubiquitously with highest expression in the ovary and testis.

The protein resides in the cytoplasm. It is found in the nucleus. Its function is as follows. Part of a specialized transcription system that mediates the transcription of most ribosomal proteins through the 5'-TCT-3' motif which is a core promoter element at these genes. Seems to also mediate the transcription of NF1. Does not bind the TATA box. Members of the TBP family are differentially required to regulate transcription and development during early embryogenesis. Particularly regulates genes that have a role in catabolism. This chain is TATA box-binding protein-like 1 (tbpl1), found in Xenopus laevis (African clawed frog).